We begin with the raw amino-acid sequence, 432 residues long: Peptidase B (432 aa).

Mn(2+)-binding residues include lysine 196 and aspartate 201. Residue lysine 208 is part of the active site. Residues aspartate 219, aspartate 278, and glutamate 280 each contribute to the Mn(2+) site. Arginine 282 is an active-site residue.

This sequence belongs to the peptidase M17 family. In terms of assembly, homohexamer. Requires Mn(2+) as cofactor.

The protein localises to the cytoplasm. The enzyme catalyses Release of an N-terminal amino acid, Xaa, from a peptide or arylamide. Xaa is preferably Glu or Asp but may be other amino acids, including Leu, Met, His, Cys and Gln.. In terms of biological role, probably plays an important role in intracellular peptide degradation. This chain is Peptidase B, found in Yersinia pestis bv. Antiqua (strain Antiqua).